A 430-amino-acid polypeptide reads, in one-letter code: Serine--tRNA ligase (430 aa).

237 to 239 (TAE) contributes to the L-serine binding site. 268–270 (RSE) lines the ATP pocket. L-serine is bound at residue glutamate 291. 355–358 (EISS) contacts ATP. Serine 391 provides a ligand contact to L-serine.

This sequence belongs to the class-II aminoacyl-tRNA synthetase family. Type-1 seryl-tRNA synthetase subfamily. In terms of assembly, homodimer. The tRNA molecule binds across the dimer.

The protein resides in the cytoplasm. It catalyses the reaction tRNA(Ser) + L-serine + ATP = L-seryl-tRNA(Ser) + AMP + diphosphate + H(+). The catalysed reaction is tRNA(Sec) + L-serine + ATP = L-seryl-tRNA(Sec) + AMP + diphosphate + H(+). It functions in the pathway aminoacyl-tRNA biosynthesis; selenocysteinyl-tRNA(Sec) biosynthesis; L-seryl-tRNA(Sec) from L-serine and tRNA(Sec): step 1/1. Its function is as follows. Catalyzes the attachment of serine to tRNA(Ser). Is also able to aminoacylate tRNA(Sec) with serine, to form the misacylated tRNA L-seryl-tRNA(Sec), which will be further converted into selenocysteinyl-tRNA(Sec). This chain is Serine--tRNA ligase, found in Klebsiella pneumoniae (strain 342).